Consider the following 198-residue polypeptide: Probable septum site-determining protein MinC (198 aa).

The protein belongs to the MinC family. In terms of assembly, interacts with MinD and FtsZ.

Cell division inhibitor that blocks the formation of polar Z ring septums. Rapidly oscillates between the poles of the cell to destabilize FtsZ filaments that have formed before they mature into polar Z rings. Prevents FtsZ polymerization. The sequence is that of Probable septum site-determining protein MinC from Thermosipho melanesiensis (strain DSM 12029 / CIP 104789 / BI429).